The chain runs to 70 residues: Protein SlyX homolog (70 aa).

This sequence belongs to the SlyX family.

This chain is Protein SlyX homolog, found in Shewanella baltica (strain OS155 / ATCC BAA-1091).